Reading from the N-terminus, the 205-residue chain is Rho-related GTP-binding protein RhoQ (205 aa).

Position 16-23 (16-23) interacts with GTP; sequence GDGAVGKT. Positions 38 to 46 match the Effector region motif; it reads YVPTVFDHY. GTP contacts are provided by residues 63–67 and 121–124; these read DTAGQ and TQID. C202 carries the post-translational modification Cysteine methyl ester. The S-farnesyl cysteine moiety is linked to residue C202. The propeptide at 203 to 205 is removed in mature form; the sequence is LIT.

This sequence belongs to the small GTPase superfamily. Rho family. Interacts with EXO70, CDC42EP1, CDC42EP2 and CDC42EP3 in a GTP-dependent manner. Interacts with CDC42EP4, PARD6A, PARD6G (and probably PARD6B) in a GTP-dependent manner. Part of a quaternary complex containing PARD3, some PARD6 protein (PARD6A, PARD6B or PARD6G) and some atypical PKC protein (PRKCI or PRKCZ). Interacts with GOPC. Interacts with ARHGAP33/TCGAP. May be post-translationally modified by both palmitoylation and polyisoprenylation.

The protein resides in the cytoplasm. Its subcellular location is the cell membrane. Regulated by guanine nucleotide exchange factors (GEFs) which promote the exchange of bound GDP for free GTP, GTPase activating proteins (GAPs) which increase the GTP hydrolysis activity, and GDP dissociation inhibitors which inhibit the dissociation of the nucleotide from the GTPase. In terms of biological role, plasma membrane-associated small GTPase which cycles between an active GTP-bound and an inactive GDP-bound state. In active state binds to a variety of effector proteins to regulate cellular responses. Involved in epithelial cell polarization processes. May play a role in CFTR trafficking to the plasma membrane. Causes the formation of thin, actin-rich surface projections called filopodia. In Mus musculus (Mouse), this protein is Rho-related GTP-binding protein RhoQ (Rhoq).